The following is a 613-amino-acid chain: Proline--tRNA ligase (613 aa).

It belongs to the class-II aminoacyl-tRNA synthetase family. ProS type 1 subfamily. Homodimer.

It is found in the cytoplasm. It carries out the reaction tRNA(Pro) + L-proline + ATP = L-prolyl-tRNA(Pro) + AMP + diphosphate. Catalyzes the attachment of proline to tRNA(Pro) in a two-step reaction: proline is first activated by ATP to form Pro-AMP and then transferred to the acceptor end of tRNA(Pro). As ProRS can inadvertently accommodate and process non-cognate amino acids such as alanine and cysteine, to avoid such errors it has two additional distinct editing activities against alanine. One activity is designated as 'pretransfer' editing and involves the tRNA(Pro)-independent hydrolysis of activated Ala-AMP. The other activity is designated 'posttransfer' editing and involves deacylation of mischarged Ala-tRNA(Pro). The misacylated Cys-tRNA(Pro) is not edited by ProRS. This Tropheryma whipplei (strain Twist) (Whipple's bacillus) protein is Proline--tRNA ligase.